A 274-amino-acid polypeptide reads, in one-letter code: Urease accessory protein UreD (274 aa).

Belongs to the UreD family. In terms of assembly, ureD, UreF and UreG form a complex that acts as a GTP-hydrolysis-dependent molecular chaperone, activating the urease apoprotein by helping to assemble the nickel containing metallocenter of UreC. The UreE protein probably delivers the nickel.

The protein resides in the cytoplasm. Required for maturation of urease via the functional incorporation of the urease nickel metallocenter. In Thermosynechococcus vestitus (strain NIES-2133 / IAM M-273 / BP-1), this protein is Urease accessory protein UreD.